The following is a 92-amino-acid chain: Secreted RxLR effector protein RXLR-C02 (92 aa).

The first 21 residues, 1-21, serve as a signal peptide directing secretion; that stretch reads MQFHLLVMTTIAASFAATGSA. Residues 48–51 carry the RxLR motif; it reads RALR. The disordered stretch occupies residues 54–75; sequence ENRGLIGDDSDSSISDSDSEAK.

The protein belongs to the RxLR effector family.

The protein resides in the secreted. It is found in the host cytoplasm. The protein localises to the host nucleus. Functionally, secreted effector that suppresses pattern-triggered immunity (PTI) in plant host. In Plasmopara halstedii (Downy mildew of sunflower), this protein is Secreted RxLR effector protein RXLR-C02.